Reading from the N-terminus, the 151-residue chain is MAYIVALIIIALDQLTKWLVVTSMELGERIPIIDQVLYLYSHRNTGAAFGILQGQMWFFYVVTTIIVGVIIYLIQTEAKGNRLLKIALGLVLGGAIGNFIDRLLRQEVVDFIDTFGDFPIFNIADSALTIGVGLFLLNILIQGRNEKRSTR.

A run of 2 helical transmembrane segments spans residues 54-74 (GQMW…IYLI) and 83-103 (LLKI…IDRL). Active-site residues include D110 and D125. The chain crosses the membrane as a helical span at residues 120–140 (IFNIADSALTIGVGLFLLNIL).

The protein belongs to the peptidase A8 family.

Its subcellular location is the cell membrane. The catalysed reaction is Release of signal peptides from bacterial membrane prolipoproteins. Hydrolyzes -Xaa-Yaa-Zaa-|-(S,diacylglyceryl)Cys-, in which Xaa is hydrophobic (preferably Leu), and Yaa (Ala or Ser) and Zaa (Gly or Ala) have small, neutral side chains.. Its pathway is protein modification; lipoprotein biosynthesis (signal peptide cleavage). Functionally, this protein specifically catalyzes the removal of signal peptides from prolipoproteins. The protein is Lipoprotein signal peptidase of Shouchella clausii (strain KSM-K16) (Alkalihalobacillus clausii).